Here is a 419-residue protein sequence, read N- to C-terminus: MKQTVLKNNLQNLLESAENILLLQGPVGDFFLRLADWLTANGKTVHKFNFNAGDDYFYPPTQAHTVVFNDNYDAFPEFLQEYITQHHIQAVVCFGDTRPYHVIAKRIANENQASFWAFEEGYFRPYYITLEKDGVNAFSPLPRRADFFLEQFPKLAQQEYKAPTPVHGGFTPMAKNAIRYYIELFRNLRKYPDYIHHRAPNAGHYLKPWSLSILKRLNYYIEDIQIAKRVEAGKYGKFFIVPLQVFNDSQVRIHCDFPSVRSFLLHVLSSFAEHAPADTNIIIKHHPMDRGFIDYWRDIKRFIKEHPELKGRVIYVHDVPLPVFLRHGLGMVTINSTSGLSGLIHNMPVKVLGRAYYDIPGITDQNTLAEFWNHPTPPDKELFHAYRMYHLNVTQINGNFYSQVFFPNKNTSDSSTPTT.

The protein localises to the cell inner membrane. Involved in the phospholipid modification of the capsular polysaccharide, a strong requirement for its translocation to the cell surface. The protein is Capsule polysaccharide modification protein LipB (lipB) of Neisseria meningitidis serogroup A / serotype 4A (strain DSM 15465 / Z2491).